The chain runs to 62 residues: Large ribosomal subunit protein uL29 (62 aa).

The protein belongs to the universal ribosomal protein uL29 family.

This Vesicomyosocius okutanii subsp. Calyptogena okutanii (strain HA) protein is Large ribosomal subunit protein uL29.